Consider the following 484-residue polypeptide: Suppressor of fused homolog (484 aa).

A disordered region spans residues methionine 1–proline 24. Residues proline 12–proline 23 are compositionally biased toward pro residues. Residue lysine 257 forms a Glycyl lysine isopeptide (Lys-Gly) (interchain with G-Cter in ubiquitin) linkage. The interval serine 279–leucine 360 is disordered. Serine 301 is subject to Phosphoserine. An N6-acetyllysine modification is found at lysine 303. Residue lysine 321 forms a Glycyl lysine isopeptide (Lys-Gly) (interchain with G-Cter in SUMO2) linkage. Positions alanine 336–leucine 347 are enriched in basic and acidic residues. Residues serine 342, serine 346, and serine 352 each carry the phosphoserine modification. Threonine 353 is modified (phosphothreonine). At serine 481 the chain carries Phosphoserine.

This sequence belongs to the SUFU family. In terms of assembly, may form homodimers. Part of a DNA-bound corepressor complex containing SAP18, GLI1 and SIN3. Part of a complex containing CTNNB1. Binds BTRC, GLI2, GLI3, SAP18 and STK36. Binds both free and DNA-bound GLI1. Interacts with KIF7. Interacts with GLI3FL and this interaction regulates the formation of either repressor or activator forms of GLI3. Its association with GLI3FL is regulated by Hh signaling and dissociation of the SUFU-GLI3 interaction requires the presence of the ciliary motor KIF3A. Interacts with ULK3; inactivating the protein kinase activity of ULK3. Interacts with RAB23. Polyubiquitinated at Lys-257 by the SCF(FBXL17) complex, leading to its subsequent degradation and allowing the release of GLI1 for proper hedgehog/smoothened signal transduction. Ubiquitination is impaired by phosphorylation at Ser-342, Ser-346, Ser-352 and Thr-353. In terms of processing, phosphorylation at Ser-342, Ser-346, Ser-352 and Thr-353 prevents ubiquitination by the SCF(FBXL17) complex. In terms of tissue distribution, ubiquitous in adult tissues. Detected in osteoblasts of the perichondrium in the developing limb of 12-week old embryos. Isoform 1 is detected in fetal brain, lung, kidney and testis. Isoform 2 is detected in fetal testis, and at much lower levels in fetal brain, lung and kidney.

Its subcellular location is the cytoplasm. It localises to the nucleus. Functionally, negative regulator in the hedgehog/smoothened signaling pathway. Down-regulates GLI1-mediated transactivation of target genes. Down-regulates GLI2-mediated transactivation of target genes. Part of a corepressor complex that acts on DNA-bound GLI1. May also act by linking GLI1 to BTRC and thereby targeting GLI1 to degradation by the proteasome. Sequesters GLI1, GLI2 and GLI3 in the cytoplasm, this effect is overcome by binding of STK36 to both SUFU and a GLI protein. Negative regulator of beta-catenin signaling. Regulates the formation of either the repressor form (GLI3R) or the activator form (GLI3A) of the full-length form of GLI3 (GLI3FL). GLI3FL is complexed with SUFU in the cytoplasm and is maintained in a neutral state. Without the Hh signal, the SUFU-GLI3 complex is recruited to cilia, leading to the efficient processing of GLI3FL into GLI3R. When Hh signaling is initiated, SUFU dissociates from GLI3FL and the latter translocates to the nucleus, where it is phosphorylated, destabilized, and converted to a transcriptional activator (GLI3A). Required for normal embryonic development. Required for the proper formation of hair follicles and the control of epidermal differentiation. The polypeptide is Suppressor of fused homolog (Homo sapiens (Human)).